We begin with the raw amino-acid sequence, 424 residues long: S-adenosylmethionine synthase (424 aa).

His-16 is an ATP binding site. Asp-18 contributes to the Mg(2+) binding site. A K(+)-binding site is contributed by Glu-44. L-methionine is bound by residues Glu-57 and Gln-100. The interval 100–110 is flexible loop; the sequence is QSPDIAQGVNT. Residues 175–177, 251–252, Asp-260, 266–267, Ala-283, and Lys-287 contribute to the ATP site; these read DGK, KF, and RK. Residue Asp-260 participates in L-methionine binding. Lys-291 is a binding site for L-methionine.

Belongs to the AdoMet synthase family. Homotetramer; dimer of dimers. It depends on Mg(2+) as a cofactor. K(+) is required as a cofactor.

The protein localises to the cytoplasm. It carries out the reaction L-methionine + ATP + H2O = S-adenosyl-L-methionine + phosphate + diphosphate. Its pathway is amino-acid biosynthesis; S-adenosyl-L-methionine biosynthesis; S-adenosyl-L-methionine from L-methionine: step 1/1. In terms of biological role, catalyzes the formation of S-adenosylmethionine (AdoMet) from methionine and ATP. The overall synthetic reaction is composed of two sequential steps, AdoMet formation and the subsequent tripolyphosphate hydrolysis which occurs prior to release of AdoMet from the enzyme. The polypeptide is S-adenosylmethionine synthase (Nostoc punctiforme (strain ATCC 29133 / PCC 73102)).